Here is a 493-residue protein sequence, read N- to C-terminus: MIPTQPLTADLDCDLGLERPDRPEEACGVFALYAPGEEVARMAYFGLYALQHRGQESAGIAVFEGDRVMLHKDMGLVSQVFDPEILQQLQGSLAVGHTRYSTTGSSRIANAQPALLETRLGPVALAHNGNLVNTVELRQELLAKNHELTTTTDSELIAFAIMEAVAEGQDWRGAIESACRRSQGAFSLTIGTPEALYGTRDPNGIRPLVLGTLESNGQTRYVLSSETCGLDIIGADYVRDIAPGEMVRITDAGLESWTWAEAPQPKLCVFEMIYFARPDSLFHGESLYSYRRRIGQRLAKEAPADVDLVLGVPDSGIPAAIGFSEALGIPYAEGLIKNRYVGRTFIQPTQSMRETGIRMKLNPLKDVLAGKRIAIIDDSIVRGTTSRKLVKALRDAGATEVHMRISSPPVTHPCFYGIDTDTQDQLIAATRSVSEITEQIGVDSLAYLTEQGMLEATRESIGNFCTACFNGRYPIAIPEEIKRSKLMLETVTA.

Positions 1–26 (MIPTQPLTADLDCDLGLERPDRPEEA) are excised as a propeptide. C27 functions as the Nucleophile in the catalytic mechanism. In terms of domain architecture, Glutamine amidotransferase type-2 spans 27–252 (CGVFALYAPG…PGEMVRITDA (226 aa)). C268 is a binding site for [4Fe-4S] cluster. The Mg(2+) site is built by S315, D377, and D378. The [4Fe-4S] cluster site is built by C414, C465, and C468.

In the C-terminal section; belongs to the purine/pyrimidine phosphoribosyltransferase family. Requires Mg(2+) as cofactor. [4Fe-4S] cluster serves as cofactor.

It catalyses the reaction 5-phospho-beta-D-ribosylamine + L-glutamate + diphosphate = 5-phospho-alpha-D-ribose 1-diphosphate + L-glutamine + H2O. Its pathway is purine metabolism; IMP biosynthesis via de novo pathway; N(1)-(5-phospho-D-ribosyl)glycinamide from 5-phospho-alpha-D-ribose 1-diphosphate: step 1/2. Its function is as follows. Catalyzes the formation of phosphoribosylamine from phosphoribosylpyrophosphate (PRPP) and glutamine. In Synechococcus elongatus (strain ATCC 33912 / PCC 7942 / FACHB-805) (Anacystis nidulans R2), this protein is Amidophosphoribosyltransferase.